A 253-amino-acid polypeptide reads, in one-letter code: Proteasome subunit alpha (253 aa).

A disordered region spans residues 229-253 (ADESQSYIDDIEDAADDSDDDDDEE). Residues 237-253 (DDIEDAADDSDDDDDEE) are compositionally biased toward acidic residues.

The protein belongs to the peptidase T1A family. As to quaternary structure, the 20S proteasome core is composed of 14 alpha and 14 beta subunits that assemble into four stacked heptameric rings, resulting in a barrel-shaped structure. The two inner rings, each composed of seven catalytic beta subunits, are sandwiched by two outer rings, each composed of seven alpha subunits. The catalytic chamber with the active sites is on the inside of the barrel. Has a gated structure, the ends of the cylinder being occluded by the N-termini of the alpha-subunits. Is capped at one or both ends by the proteasome regulatory ATPase, PAN.

It localises to the cytoplasm. The formation of the proteasomal ATPase PAN-20S proteasome complex, via the docking of the C-termini of PAN into the intersubunit pockets in the alpha-rings, triggers opening of the gate for substrate entry. Interconversion between the open-gate and close-gate conformations leads to a dynamic regulation of the 20S proteasome proteolysis activity. Component of the proteasome core, a large protease complex with broad specificity involved in protein degradation. This is Proteasome subunit alpha from Halobacterium salinarum (strain ATCC 29341 / DSM 671 / R1).